The chain runs to 340 residues: Sulfotransferase 2B1 (340 aa).

67–72 (KSGTNW) is a 3'-phosphoadenylyl sulfate binding site. Substrate is bound by residues Trp-95 and Trp-100. The Proton acceptor role is filled by His-122. 3'-phosphoadenylyl sulfate-binding positions include Arg-144, Ser-152, Tyr-207, 241–246 (SAFAAM), and 271–273 (RKG). The segment at 301–340 (LPSFPWDRSAEDGSPDGETEPSPSPSPGLASDDPNPGSSQ) is disordered.

The protein belongs to the sulfotransferase 1 family. In terms of tissue distribution, isoform 1 is expressed in skin and testis. Higher level of isoform 2 expressed in skin and intestine, moderate level in the kidney, low level in liver, stomach and placenta.

It is found in the cytoplasm. The protein localises to the cytosol. The protein resides in the microsome. It localises to the nucleus. It catalyses the reaction an alcohol + 3'-phosphoadenylyl sulfate = an alkyl sulfate + adenosine 3',5'-bisphosphate + H(+). It carries out the reaction pregnenolone + 3'-phosphoadenylyl sulfate = pregnenolone sulfate + adenosine 3',5'-bisphosphate + H(+). The enzyme catalyses 3beta-hydroxyandrost-5-en-17-one + 3'-phosphoadenylyl sulfate = dehydroepiandrosterone 3-sulfate + adenosine 3',5'-bisphosphate + H(+). The catalysed reaction is cholesterol + 3'-phosphoadenylyl sulfate = cholesterol sulfate + adenosine 3',5'-bisphosphate + H(+). Functionally, sulfotransferase that utilizes 3'-phospho-5'-adenylyl sulfate (PAPS) as sulfonate donor to catalyze the sulfate conjugation. Sulfonation increases the water solubility of most compounds, and therefore their renal excretion, but it can also result in bioactivation to form active metabolites. Sulfonates cholesterol. Catalyzes sulfation of the 3beta-hydroxyl groups of steroids, such as, pregnenolone and dehydroepiandrosterone (DHEA). Conjugates efficiently cholesterol but has a greater affinity for pregnenolone sulfation. Does not show high activity with DHEA. Plays a role in epidermal cholesterol metabolism and in the regulation of epidermal proliferation and differentiation. In terms of biological role, prefers pregnenolone over DHEA as a substrate and does not sulfate cholesterol. This is Sulfotransferase 2B1 from Rattus norvegicus (Rat).